The following is a 157-amino-acid chain: MDYTIEHVLTRKIAGFHLVGPWEKTVPQGFEQLSLWVDNFHIQPQAWLAVYYDNPQQVAPEKLRADTVVEVPADFTLPENSVGVILTDLPGGQYAVARARVENNDFGTPWLAFFTRLHQDVRYQMAARPCFEIYLNDGKRDGYWDIDMYIPVQTSGE.

This sequence belongs to the DNA gyrase inhibitor family. In terms of assembly, interacts with DNA gyrase.

Its subcellular location is the cytoplasm. In terms of biological role, inhibits the supercoiling activity of DNA gyrase. Acts by inhibiting DNA gyrase at an early step, prior to (or at the step of) binding of DNA by the gyrase. It protects cells against toxins that target DNA gyrase, by inhibiting activity of these toxins and reducing the formation of lethal double-strand breaks in the cell. The polypeptide is DNA gyrase inhibitor (Cronobacter sakazakii (strain ATCC BAA-894) (Enterobacter sakazakii)).